The primary structure comprises 547 residues: MAAKEVRFGDAARSAVITGVNVLADAVKVTLGPKGRNVVLERSYGAPTITKDGVSVAKEIELKDKFENMGAQMVKEVASKTSDTAGDGTTTATVLAQAIVKEGMRYVAAGMNPMDLKRGIEKAVSAAVEELKKLSKPCSTSKEIAQVGSISANSDAEIGRIIAEAMDKVGKEGVITVEDGSGLENELDVVEGMQFDRGYLSPYFVSSAEKQIAALENPFILLHDKKISNIRDLLPILEQVAKAGKPLLIIAEDVDGEALATLVVNNIRGILKTCAVKAPGFGDRRKAMLEDIAILTGGTVIAEEVGLSLEKAKLEDLGQAKRVEVGKENTTIIDGAGDTKAIEARVTQIRKQIEEATSDYDREKLQERVAKLAGGVALIKVGAATEMEMKEKKARVEDAFHATRAAVEEGIVPGGGVALLRTIDAVSKAKGDNHDQDSGIKIVLRALEEPLRQIVTNCGDEASVVVNKVKEGKGNFGYNAATGEYGDLVAMGVLDPTKVTRSALQNASSVAGLILTTDAMVAELPKEDSPGAGAGMGGMGGMGGMDM.

ATP-binding positions include 30–33 (TLGP), Lys-51, 87–91 (DGTTT), Gly-415, 479–481 (NAA), and Asp-495. The tract at residues 525 to 547 (PKEDSPGAGAGMGGMGGMGGMDM) is disordered. The span at 532 to 547 (AGAGMGGMGGMGGMDM) shows a compositional bias: gly residues.

The protein belongs to the chaperonin (HSP60) family. As to quaternary structure, forms a cylinder of 14 subunits composed of two heptameric rings stacked back-to-back. Interacts with the co-chaperonin GroES.

The protein resides in the cytoplasm. It catalyses the reaction ATP + H2O + a folded polypeptide = ADP + phosphate + an unfolded polypeptide.. In terms of biological role, together with its co-chaperonin GroES, plays an essential role in assisting protein folding. The GroEL-GroES system forms a nano-cage that allows encapsulation of the non-native substrate proteins and provides a physical environment optimized to promote and accelerate protein folding. This chain is Chaperonin GroEL, found in Nitrosomonas eutropha (strain DSM 101675 / C91 / Nm57).